The primary structure comprises 105 residues: Met repressor (105 aa).

Belongs to the MetJ family. In terms of assembly, homodimer.

The protein localises to the cytoplasm. In terms of biological role, this regulatory protein, when combined with SAM (S-adenosylmethionine) represses the expression of the methionine regulon and of enzymes involved in SAM synthesis. In Haemophilus influenzae (strain 86-028NP), this protein is Met repressor.